The primary structure comprises 485 residues: Lysophospholipid acyltransferase 5 (485 aa).

N-acetylalanine is present on A2. The next 7 helical transmembrane spans lie at 35-55 (ASEQALRLIISIFLGYPFALF), 82-102 (YNFGTQLYHSLLCIVLQFLIL), 108-128 (TITAVLTTFCVQMGYLLAGYY), 139-158 (WTMPHCVLTLKLIGLAMDYY), 176-196 (IWGVPSLLEISGFSYFYGAFL), 232-252 (LALGLVYLVGYTLLSPHITED), and 283-303 (VTCWLVTEGVCILTGLGFNGL). Residues N336 and H372 contribute to the active site. The next 3 helical transmembrane spans lie at 362–382 (GLSLLFLALWHGLHSGYLVCF), 420–440 (LAQQTIHWLFMGYSMTAFCLF), and 448–468 (VYKSIYFLGHVFFLSLLFILP). The short motif at 482–485 (KKME) is the Di-lysine motif element.

Belongs to the membrane-bound acyltransferase family.

Its subcellular location is the endoplasmic reticulum membrane. It catalyses the reaction a 1-acyl-sn-glycero-3-phosphocholine + an acyl-CoA = a 1,2-diacyl-sn-glycero-3-phosphocholine + CoA. It carries out the reaction a 1-acyl-sn-glycero-3-phosphoethanolamine + an acyl-CoA = a 1,2-diacyl-sn-glycero-3-phosphoethanolamine + CoA. The enzyme catalyses a 1-acyl-sn-glycero-3-phospho-L-serine + an acyl-CoA = a 1,2-diacyl-sn-glycero-3-phospho-L-serine + CoA. The catalysed reaction is (9Z,12Z)-octadecadienoyl-CoA + a 1-acyl-sn-glycero-3-phosphocholine = 1-acyl-2-(9Z,12Z)-octadecadienoyl-sn-glycero-3-phosphocholine + CoA. It catalyses the reaction (5Z,8Z,11Z,14Z)-eicosatetraenoyl-CoA + a 1-acyl-sn-glycero-3-phosphocholine = 1-acyl-2-(5Z,8Z,11Z,14Z-eicosatetraenoyl)-sn-glycero-3-phosphocholine + CoA. It carries out the reaction dodecanoyl-CoA + 1-hexadecanoyl-sn-glycero-3-phosphocholine = 1-hexadecanoyl-2-dodecanoyl-sn-glycero-3-phosphocholine + CoA. The enzyme catalyses octadecanoyl-CoA + 1-hexadecanoyl-sn-glycero-3-phosphocholine = 1-hexadecanoyl-2-octadecanoyl-sn-glycero-3-phosphocholine + CoA. The catalysed reaction is 1-dodecanoyl-sn-glycero-3-phosphocholine + hexadecanoyl-CoA = 1-dodecanoyl-2-hexadecanoyl-sn-glycero-3-phosphocholine + CoA. It catalyses the reaction 1-tetradecanoyl-sn-glycero-3-phosphocholine + hexadecanoyl-CoA = 1-tetradecanoyl-2-hexadecanoyl-sn-glycero-3-phosphocholine + CoA. It carries out the reaction 1-hexadecanoyl-sn-glycero-3-phosphocholine + hexadecanoyl-CoA = 1,2-dihexadecanoyl-sn-glycero-3-phosphocholine + CoA. The enzyme catalyses 1-octadecanoyl-sn-glycero-3-phosphocholine + hexadecanoyl-CoA = 1-octadecanoyl-2-hexadecanoyl-sn-glycero-3-phosphocholine + CoA. The catalysed reaction is 1-(9Z-octadecenoyl)-sn-glycero-3-phosphocholine + hexadecanoyl-CoA = 1-(9Z-octadecenoyl)-2-hexadecanoyl-sn-glycero-3-phosphocholine + CoA. It catalyses the reaction (9Z)-hexadecenoyl-CoA + 1-hexadecanoyl-sn-glycero-3-phosphocholine = 1-hexadecanoyl-2-(9Z-hexadecenoyl)-sn-glycero-3-phosphocholine + CoA. It carries out the reaction 1-hexadecanoyl-sn-glycero-3-phosphocholine + (9Z)-octadecenoyl-CoA = 1-hexadecanoyl-2-(9Z-octadecenoyl)-sn-glycero-3-phosphocholine + CoA. The enzyme catalyses (9Z,12Z)-octadecadienoyl-CoA + 1-hexadecanoyl-sn-glycero-3-phosphocholine = 1-hexadecanoyl-2-(9Z,12Z-octadecadienoyl)-sn-glycero-3-phosphocholine + CoA. The catalysed reaction is 1-dodecanoyl-sn-glycero-3-phosphocholine + (5Z,8Z,11Z,14Z)-eicosatetraenoyl-CoA = 1-dodecanoyl-2-(5Z,8Z,11Z,14Z)-eicosatetraenoyl-sn-glycero-3-phosphocholine + CoA. It catalyses the reaction (5Z,8Z,11Z,14Z)-eicosatetraenoyl-CoA + 1-hexadecanoyl-sn-glycero-3-phosphocholine = 1-hexadecanoyl-2-(5Z,8Z,11Z,14Z-eicosatetraenoyl)-sn-glycero-3-phosphocholine + CoA. It carries out the reaction 1-octadecanoyl-sn-glycero-3-phosphocholine + (5Z,8Z,11Z,14Z)-eicosatetraenoyl-CoA = 1-octadecanoyl-2-(5Z,8Z,11Z,14Z-eicosatetraenoyl)-sn-glycero-3-phosphocholine + CoA. The enzyme catalyses 1-eicosanoyl-sn-glycero-3-phosphocholine + (5Z,8Z,11Z,14Z)-eicosatetraenoyl-CoA = 1-eicosanoyl-2-(5Z,8Z,11Z,14Z)-eicosatetraenoyl-sn-glycero-3-phosphocholine + CoA. The catalysed reaction is 1-(9Z-octadecenoyl)-sn-glycero-3-phosphocholine + (9Z)-octadecenoyl-CoA = 1,2-di-(9Z-octadecenoyl)-sn-glycero-3-phosphocholine + CoA. It catalyses the reaction 1-(9Z-octadecenoyl)-sn-glycero-3-phosphocholine + (9Z,12Z)-octadecadienoyl-CoA = 1-(9Z)-octadecenoyl-2-(9Z,12Z)-octadecadienoyl-sn-glycero-3-phosphocholine + CoA. It carries out the reaction 1-(9Z-octadecenoyl)-sn-glycero-3-phosphocholine + (5Z,8Z,11Z,14Z)-eicosatetraenoyl-CoA = 1-(9Z)-octadecenoyl-2-(5Z,8Z,11Z,14Z)-icosatetraenoyl-sn-glycero-3-phosphocholine + CoA. The enzyme catalyses a 1-acyl-sn-glycero-3-phosphoethanolamine + (9Z,12Z)-octadecadienoyl-CoA = 1-acyl-2-(9Z,12Z)-octadecadienoyl-sn-glycero-3-phosphoethanolamine + CoA. The catalysed reaction is 1-(9Z-octadecenoyl)-sn-glycero-3-phosphoethanolamine + (9Z,12Z)-octadecadienoyl-CoA = 1-(9Z)-octadecenoyl-2-(9Z,12Z)-octadecadienoyl-sn-glycero-3-phosphoethanolamine + CoA. It catalyses the reaction 1-(10Z-heptadecenoyl)-sn-glycero-3-phosphoethanolamine + (9Z,12Z)-octadecadienoyl-CoA = 1-(10Z-heptadecenoyl)-2-(9Z,12Z-octadecadienoyl)-sn-glycero-3-phosphoethanolamine + CoA. It carries out the reaction a 1-acyl-sn-glycero-3-phosphoethanolamine + (5Z,8Z,11Z,14Z)-eicosatetraenoyl-CoA = 1-acyl-2-(5Z,8Z,11Z,14Z)-eicosatetraenoyl-sn-glycero-3-phosphoethanolamine + CoA. The enzyme catalyses 1-hexadecanoyl-sn-glycero-3-phosphoethanolamine + (5Z,8Z,11Z,14Z)-eicosatetraenoyl-CoA = 1-hexadecanoyl-2-(5Z,8Z,11Z,14Z-eicosatetraenoyl)-sn-glycero-3-phosphoethanolamine + CoA. The catalysed reaction is 1-(9Z-octadecenoyl)-sn-glycero-3-phosphoethanolamine + (5Z,8Z,11Z,14Z)-eicosatetraenoyl-CoA = 1-(9Z)-octadecenoyl-2-(5Z,8Z,11Z,14Z)-eicosatetraenoyl-sn-glycero-3-phosphoethanolamine + CoA. It catalyses the reaction 1-(10Z-heptadecenoyl)-sn-glycero-3-phosphoethanolamine + (5Z,8Z,11Z,14Z)-eicosatetraenoyl-CoA = 1-(10Z-heptadecenoyl)-2-(5Z,8Z,11Z,14Z-eicosatetraenoyl)-sn-glycero-3-phosphoethanolamine + CoA. It carries out the reaction a 1-O-(1Z-alkenyl)-sn-glycero-3-phosphoethanolamine + (5Z,8Z,11Z,14Z)-eicosatetraenoyl-CoA = 1-O-(1Z)-alkenyl-2-(5Z,8Z,11Z,14Z)-eicosatetraenoyl-sn-glycero-3-phosphoethanolamine + CoA. The enzyme catalyses a 1-acyl-sn-glycero-3-phospho-L-serine + (9Z,12Z)-octadecadienoyl-CoA = 1-acyl-2-(9Z,12Z-octadecadienoyl)-sn-glycero-3-phospho-L-serine + CoA. The catalysed reaction is a 1-acyl-sn-glycero-3-phospho-L-serine + (5Z,8Z,11Z,14Z)-eicosatetraenoyl-CoA = 1-acyl-2-(5Z,8Z,11Z,14Z-eicosatetraenoyl)-sn-glycero-3-phospho-L-serine + CoA. It catalyses the reaction 1-hexadecanoyl-sn-glycero-3-phospho-L-serine + (9Z)-octadecenoyl-CoA = 1-hexadecanoyl-2-(9Z-octadecenoyl)-sn-glycero-3-phospho-L-serine + CoA. It carries out the reaction 1-(9Z-octadecenoyl)-sn-glycero-3-phospho-L-serine + (9Z)-octadecenoyl-CoA = 1,2-di-(9Z)-octadecenoyl-sn-glycero-3-phospho-L-serine + CoA. The enzyme catalyses 1-hexadecanoyl-sn-glycero-3-phospho-L-serine + (9Z,12Z)-octadecadienoyl-CoA = 1-hexadecanoyl-2-(9Z,12Z-octadecadienoyl)-sn-glycero-3-phospho-L-serine + CoA. The catalysed reaction is 1-(9Z-octadecenoyl)-sn-glycero-3-phospho-L-serine + (9Z,12Z)-octadecadienoyl-CoA = 1-(9Z-octadecenoyl)-2-(9Z,12Z-octadienoyl)-sn-glycero-3-phospho-L-serine + CoA. It catalyses the reaction 1-hexadecanoyl-sn-glycero-3-phospho-L-serine + (5Z,8Z,11Z,14Z)-eicosatetraenoyl-CoA = 1-hexadecanoyl-2-(5Z,8Z,11Z,14Z-eicosatetraenoyl)-sn-glycero-3-phospho-L-serine + CoA. It carries out the reaction 1-(9Z-octadecenoyl)-sn-glycero-3-phospho-L-serine + (5Z,8Z,11Z,14Z)-eicosatetraenoyl-CoA = 1-(9Z-octadecenoyl)-2-(5Z,8Z,11Z,14Z-eicosatetraenoyl)-sn-glycero-3-phospho-L-serine + CoA. It functions in the pathway lipid metabolism; phospholipid metabolism. In terms of biological role, lysophospholipid O-acyltransferase (LPLAT) that catalyzes the reacylation step of the phospholipid remodeling process also known as the Lands cycle. Catalyzes transfer of the fatty acyl chain from fatty acyl-CoA to 1-acyl lysophospholipid to form various classes of phospholipids. Converts 1-acyl lysophosphatidylcholine (LPC) into phosphatidylcholine (PC) (LPCAT activity), 1-acyl lysophosphatidylserine (LPS) into phosphatidylserine (PS) (LPSAT activity) and 1-acyl lysophosphatidylethanolamine (LPE) into phosphatidylethanolamine (PE) (LPEAT activity). Favors polyunsaturated fatty acyl-CoAs as acyl donors compared to saturated fatty acyl-CoAs. Has higher activity for LPC acyl acceptors compared to LPEs and LPSs. Can also transfer the fatty acyl chain from fatty acyl-CoA to 1-O-alkyl lysophospholipid or 1-O-alkenyl lysophospholipid with lower efficiency. Acts as a major LPC O-acyltransferase in liver and intestine. As a component of the liver X receptor/NR1H3 or NR1H2 signaling pathway, mainly catalyzes the incorporation of arachidonate into PCs of endoplasmic reticulum (ER) membranes, increasing membrane dynamics and enabling triacylglycerols transfer to nascent very low-density lipoprotein (VLDL) particles. Promotes processing of sterol regulatory protein SREBF1 in hepatocytes, likely by facilitating the translocation of SREBF1-SCAP complex from ER to the Golgi apparatus. Participates in mechanisms by which the liver X receptor/NR1H3 or NR1H2 signaling pathway counteracts lipid-induced ER stress response and inflammation. Down-regulates hepatic inflammation by limiting arachidonic acid availability for synthesis of inflammatory eicosanoids, such as prostaglandins. In enterocytes, acts as a component of a gut-brain feedback loop that coordinates dietary lipid absorption and food intake. Regulates the abundance of PCs containing linoleate and arachidonate in enterocyte membranes, enabling passive diffusion of fatty acids and cholesterol across the membrane for efficient chylomicron assembly. In the intestinal crypt, acts as a component of dietary-responsive phospholipid-cholesterol axis, regulating the biosynthesis of cholesterol and its mitogenic effects on intestinal stem cells. The polypeptide is Lysophospholipid acyltransferase 5 (LPCAT3) (Bos taurus (Bovine)).